The chain runs to 157 residues: Probable chemoreceptor glutamine deamidase CheD (157 aa).

The protein belongs to the CheD family.

It carries out the reaction L-glutaminyl-[protein] + H2O = L-glutamyl-[protein] + NH4(+). Probably deamidates glutamine residues to glutamate on methyl-accepting chemotaxis receptors (MCPs), playing an important role in chemotaxis. The protein is Probable chemoreceptor glutamine deamidase CheD of Archaeoglobus fulgidus (strain ATCC 49558 / DSM 4304 / JCM 9628 / NBRC 100126 / VC-16).